The chain runs to 309 residues: Putative G-protein coupled receptor B0244.4 (309 aa).

Helical transmembrane passes span 39 to 59 (SIIF…ACFL), 82 to 102 (YIFM…MLAL), 114 to 134 (IYFL…GSYV), 162 to 182 (FAIA…MFQA), 204 to 224 (IMLV…SFVL), and 256 to 276 (WTLF…FYLV).

This sequence belongs to the G-protein coupled receptor 1 family. B0244 subfamily.

It localises to the cell membrane. In Caenorhabditis elegans, this protein is Putative G-protein coupled receptor B0244.4.